The chain runs to 104 residues: Large ribosomal subunit protein bL21 (104 aa).

This sequence belongs to the bacterial ribosomal protein bL21 family. As to quaternary structure, part of the 50S ribosomal subunit. Contacts protein L20.

This protein binds to 23S rRNA in the presence of protein L20. The chain is Large ribosomal subunit protein bL21 from Pseudomonas putida (strain W619).